A 267-amino-acid chain; its full sequence is 4-hydroxy-tetrahydrodipicolinate reductase (267 aa).

NAD(+) is bound by residues 12 to 17, Asp-38, 100 to 102, and 126 to 129; these read GARGRM, GTT, and APNF. Catalysis depends on His-156, which acts as the Proton donor/acceptor. His-157 serves as a coordination point for (S)-2,3,4,5-tetrahydrodipicolinate. Lys-160 serves as the catalytic Proton donor. (S)-2,3,4,5-tetrahydrodipicolinate is bound at residue 166–167; it reads GT.

Belongs to the DapB family.

It localises to the cytoplasm. It catalyses the reaction (S)-2,3,4,5-tetrahydrodipicolinate + NAD(+) + H2O = (2S,4S)-4-hydroxy-2,3,4,5-tetrahydrodipicolinate + NADH + H(+). The catalysed reaction is (S)-2,3,4,5-tetrahydrodipicolinate + NADP(+) + H2O = (2S,4S)-4-hydroxy-2,3,4,5-tetrahydrodipicolinate + NADPH + H(+). The protein operates within amino-acid biosynthesis; L-lysine biosynthesis via DAP pathway; (S)-tetrahydrodipicolinate from L-aspartate: step 4/4. Its function is as follows. Catalyzes the conversion of 4-hydroxy-tetrahydrodipicolinate (HTPA) to tetrahydrodipicolinate. The protein is 4-hydroxy-tetrahydrodipicolinate reductase of Bacillus pumilus (strain SAFR-032).